Reading from the N-terminus, the 291-residue chain is 3-hydroxy-5-phosphonooxypentane-2,4-dione thiolase (291 aa).

K203 (schiff-base intermediate with substrate) is an active-site residue.

It belongs to the DeoC/FbaB aldolase family. As to quaternary structure, homodecamer.

It is found in the cytoplasm. It catalyses the reaction dihydroxyacetone phosphate + acetyl-CoA = 3-hydroxy-2,4-dioxopentyl phosphate + CoA. In terms of biological role, involved in the degradation of phospho-AI-2, thereby terminating induction of the lsr operon and closing the AI-2 signaling cycle. Catalyzes the transfer of an acetyl moiety from 3-hydroxy-5-phosphonooxypentane-2,4-dione to CoA to form glycerone phosphate and acetyl-CoA. This is 3-hydroxy-5-phosphonooxypentane-2,4-dione thiolase from Escherichia coli O139:H28 (strain E24377A / ETEC).